We begin with the raw amino-acid sequence, 1342 residues long: DNA-directed RNA polymerase subunit beta (1342 aa).

Belongs to the RNA polymerase beta chain family. As to quaternary structure, the RNAP catalytic core consists of 2 alpha, 1 beta, 1 beta' and 1 omega subunit. When a sigma factor is associated with the core the holoenzyme is formed, which can initiate transcription.

The catalysed reaction is RNA(n) + a ribonucleoside 5'-triphosphate = RNA(n+1) + diphosphate. In terms of biological role, DNA-dependent RNA polymerase catalyzes the transcription of DNA into RNA using the four ribonucleoside triphosphates as substrates. This is DNA-directed RNA polymerase subunit beta from Enterobacter sp. (strain 638).